A 301-amino-acid chain; its full sequence is Zinc finger protein LEE1 (301 aa).

A disordered region spans residues 1-25; that stretch reads MDAFENMSVSNHPGGNARRNSQSAN. Residues 7–25 are compositionally biased toward polar residues; it reads MSVSNHPGGNARRNSQSAN. Residues S21 and S30 each carry the phosphoserine modification. C3H1-type zinc fingers lie at residues 87–114 and 123–145; these read DYSH…HSPD and PCKY…HVLP. The residue at position 282 (S282) is a Phosphoserine.

The protein is Zinc finger protein LEE1 (LEE1) of Saccharomyces cerevisiae (strain ATCC 204508 / S288c) (Baker's yeast).